A 539-amino-acid chain; its full sequence is MHSKILILDFGSQVTQLIARRVRDSGVFSEVYPYDVSDEFVRNYGAAGVILSGGPNSVIEGDESPRVPQAVFELGVPVLGICYGMQAMAEQLGGKVENGTVREFGYAEVRAHGHTALLKDISDFTTPEGHGMLKVWMSHGDKVNEMPPGFKLMASTPNCPIAGMADEARHMYAFQFHPEVTHTLQGKAIIARFVHDICGCKSDWNMPDYIAEAVEKIRQQVGNDEVILGLSGGVDSSVAAALIHRAIGDQLTCVFVDHGLLRLDEGKMVMEMFADHLGVNVIRIDAVDQFMGHLAGVTDPEAKRKIIGREFVEVFQVEAGKRKNAKWLAQGTIYPDVIESAGKGKKGHTIKSHHNVGGLPETLNLQLLEPLRELFKDEVRQLGVALGLPHDMVYRHPFPGPGLGVRILGEVKKDFADLLRRADAIFIEELRNTPYVLAAGASESTDNGIPHRNWYDATSQAFAVFLPVKSVGVMGDGRTYEYVVALRAVQTQDFMTAHWAHLPYELLGKVSNRIINEVRGINRVVYDISGKPPATIEWE.

Positions 4–203 (KILILDFGSQ…VHDICGCKSD (200 aa)) constitute a Glutamine amidotransferase type-1 domain. C82 functions as the Nucleophile in the catalytic mechanism. Active-site residues include H177 and E179. In terms of domain architecture, GMPS ATP-PPase spans 204 to 395 (WNMPDYIAEA…LGLPHDMVYR (192 aa)). 231–237 (SGGVDSS) serves as a coordination point for ATP.

Homodimer.

The enzyme catalyses XMP + L-glutamine + ATP + H2O = GMP + L-glutamate + AMP + diphosphate + 2 H(+). Its pathway is purine metabolism; GMP biosynthesis; GMP from XMP (L-Gln route): step 1/1. Catalyzes the synthesis of GMP from XMP. The protein is GMP synthase [glutamine-hydrolyzing] of Herminiimonas arsenicoxydans.